Consider the following 576-residue polypeptide: Alkaline phosphatase PhoD (576 aa).

The signal sequence occupies residues 1–32 (MNSLLHHSFLKTVFSSLAIAIVTSSLSSVTIA). Zn(2+) is bound by residues aspartate 68 and threonine 107. Threonine 107 acts as the Phosphothreonine intermediate in catalysis. Cysteine 108 and cysteine 144 are joined by a disulfide. Substrate-binding positions include asparagine 128 and 188 to 190 (KDR). Residues cysteine 248 and cysteine 332 are joined by a disulfide bond. 5 residues coordinate Zn(2+): aspartate 318, histidine 322, aspartate 363, histidine 364, and histidine 508. An intrachain disulfide couples cysteine 562 to cysteine 573.

In terms of assembly, monomer. Requires Zn(2+) as cofactor.

It carries out the reaction a phosphate monoester + H2O = an alcohol + phosphate. Alkaline phosphatase with broad substrate specificity. Has phosphatase activity towards nucleotide and sugar phosphates with a preference to nucleotide phosphates. Has no phosphodiesterase activity. The chain is Alkaline phosphatase PhoD from Zymomonas mobilis subsp. mobilis (strain ATCC 31821 / ZM4 / CP4).